Reading from the N-terminus, the 252-residue chain is 1-(5-phosphoribosyl)-5-[(5-phosphoribosylamino)methylideneamino] imidazole-4-carboxamide isomerase (252 aa).

The active-site Proton acceptor is the aspartate 8. Aspartate 129 acts as the Proton donor in catalysis.

This sequence belongs to the HisA/HisF family.

It localises to the cytoplasm. The enzyme catalyses 1-(5-phospho-beta-D-ribosyl)-5-[(5-phospho-beta-D-ribosylamino)methylideneamino]imidazole-4-carboxamide = 5-[(5-phospho-1-deoxy-D-ribulos-1-ylimino)methylamino]-1-(5-phospho-beta-D-ribosyl)imidazole-4-carboxamide. Its pathway is amino-acid biosynthesis; L-histidine biosynthesis; L-histidine from 5-phospho-alpha-D-ribose 1-diphosphate: step 4/9. The protein is 1-(5-phosphoribosyl)-5-[(5-phosphoribosylamino)methylideneamino] imidazole-4-carboxamide isomerase of Synechococcus sp. (strain RCC307).